Here is an 824-residue protein sequence, read N- to C-terminus: Kinesin-like protein KIFC3 (824 aa).

A disordered region spans residues 27 to 79 (EPKPGMARPAPASPAARPFPHTGQGRLRTGRGKDILPSGEEDSTSRTAARPSL). Residues 33-46 (ARPAPASPAARPFP) show a composition bias toward low complexity. Coiled-coil stretches lie at residues 100-360 (LTVQ…ENLA) and 393-430 (LLQE…LQLR). The Kinesin motor domain maps to 443-766 (NIRVIARVRP…LRFAERVRSV (324 aa)). 526–533 (GQTGAGKT) serves as a coordination point for ATP. The interval 771 to 824 (GSRRTELGSWSSQEHLEWEPACQTPQPTARAHSAPGSGTSSRPGSIRRKLQPSA) is disordered. 2 positions are modified to phosphoserine: S811 and S815. The span at 815–824 (SIRRKLQPSA) shows a compositional bias: basic residues.

It belongs to the TRAFAC class myosin-kinesin ATPase superfamily. Kinesin family. As to quaternary structure, interacts with annexin XIIIB. Predominant expression in the kidney, testis and ovary. Also expressed in brain, heart, liver, lung and uterus.

It is found in the cytoplasm. Its subcellular location is the cytoskeleton. It localises to the cytoplasmic vesicle membrane. The protein localises to the cell junction. The protein resides in the adherens junction. It is found in the microtubule organizing center. Its subcellular location is the centrosome. Its function is as follows. Minus-end microtubule-dependent motor protein. Involved in apically targeted transport. Required for zonula adherens maintenance. This Mus musculus (Mouse) protein is Kinesin-like protein KIFC3 (Kifc3).